A 103-amino-acid chain; its full sequence is Ribonuclease VapC14 (103 aa).

Residues 3 to 74 (YVLDTNVVSA…WFDDKVLRIF (72 aa)) enclose the PINc domain. Asp-6 is a binding site for Mg(2+).

Belongs to the PINc/VapC protein family. Requires Mg(2+) as cofactor.

Toxic component of a type II toxin-antitoxin (TA) system. An RNase. The cognate antitoxin is VapB14. This chain is Ribonuclease VapC14 (vapC14), found in Mycobacterium tuberculosis (strain CDC 1551 / Oshkosh).